The primary structure comprises 530 residues: [Pyruvate dehydrogenase [acetyl-transferring]]-phosphatase 2, mitochondrial (530 aa).

Residues 1-67 (MSSTASYRIF…FALRKAYRHT (67 aa)) constitute a mitochondrion transit peptide. In terms of domain architecture, PPM-type phosphatase spans 107–518 (VLRFESNQLA…DDITVMVVFF (412 aa)). The Mn(2+) site is built by Asp142, Gly143, Asp413, and Asp509.

It belongs to the PP2C family. Requires Mg(2+) as cofactor. As to expression, highly expressed in liver.

It is found in the mitochondrion. It carries out the reaction O-phospho-L-seryl-[pyruvate dehydrogenase E1 alpha subunit] + H2O = L-seryl-[pyruvate dehydrogenase E1 alpha subunit] + phosphate. With respect to regulation, mg(2+)-dependent protein phosphatase. Phosphatase activity is increased in the presence of spermine, a naturally produced polyamine. In terms of biological role, mitochondrial enzyme that catalyzes the dephosphorylation and concomitant reactivation of the alpha subunit of the E1 component of the pyruvate dehydrogenase complex (PDC), thereby stimulating the conversion of pyruvate into acetyl-CoA. Acts as a crucial regulator of T cell metabolism and function, with a particular focus on T-helper Th17. The sequence is that of [Pyruvate dehydrogenase [acetyl-transferring]]-phosphatase 2, mitochondrial (Pdp2) from Rattus norvegicus (Rat).